We begin with the raw amino-acid sequence, 355 residues long: Peptide chain release factor 1 (355 aa).

The residue at position 231 (glutamine 231) is an N5-methylglutamine. A compositionally biased stretch (basic and acidic residues) spans 280–291 (SERLAKESEARK). Residues 280–303 (SERLAKESEARKSQVGSGDRSERI) are disordered.

This sequence belongs to the prokaryotic/mitochondrial release factor family. Post-translationally, methylated by PrmC. Methylation increases the termination efficiency of RF1.

It is found in the cytoplasm. Peptide chain release factor 1 directs the termination of translation in response to the peptide chain termination codons UAG and UAA. The polypeptide is Peptide chain release factor 1 (Campylobacter jejuni subsp. jejuni serotype O:6 (strain 81116 / NCTC 11828)).